We begin with the raw amino-acid sequence, 164 residues long: Endoribonuclease YbeY (164 aa).

Zn(2+) contacts are provided by histidine 125, histidine 129, and histidine 135.

The protein belongs to the endoribonuclease YbeY family. It depends on Zn(2+) as a cofactor.

The protein localises to the cytoplasm. Functionally, single strand-specific metallo-endoribonuclease involved in late-stage 70S ribosome quality control and in maturation of the 3' terminus of the 16S rRNA. The sequence is that of Endoribonuclease YbeY from Paramagnetospirillum magneticum (strain ATCC 700264 / AMB-1) (Magnetospirillum magneticum).